A 273-amino-acid polypeptide reads, in one-letter code: 4-hydroxy-tetrahydrodipicolinate reductase (273 aa).

NAD(+) is bound by residues 12-17 (GAGGRM) and E38. Residue R39 participates in NADP(+) binding. Residues 102–104 (GTT) and 126–129 (AANF) contribute to the NAD(+) site. H159 acts as the Proton donor/acceptor in catalysis. H160 provides a ligand contact to (S)-2,3,4,5-tetrahydrodipicolinate. Residue K163 is the Proton donor of the active site. 169 to 170 (GT) contributes to the (S)-2,3,4,5-tetrahydrodipicolinate binding site.

This sequence belongs to the DapB family. Homotetramer.

Its subcellular location is the cytoplasm. It carries out the reaction (S)-2,3,4,5-tetrahydrodipicolinate + NAD(+) + H2O = (2S,4S)-4-hydroxy-2,3,4,5-tetrahydrodipicolinate + NADH + H(+). The catalysed reaction is (S)-2,3,4,5-tetrahydrodipicolinate + NADP(+) + H2O = (2S,4S)-4-hydroxy-2,3,4,5-tetrahydrodipicolinate + NADPH + H(+). It functions in the pathway amino-acid biosynthesis; L-lysine biosynthesis via DAP pathway; (S)-tetrahydrodipicolinate from L-aspartate: step 4/4. Functionally, catalyzes the conversion of 4-hydroxy-tetrahydrodipicolinate (HTPA) to tetrahydrodipicolinate. The sequence is that of 4-hydroxy-tetrahydrodipicolinate reductase from Escherichia fergusonii (strain ATCC 35469 / DSM 13698 / CCUG 18766 / IAM 14443 / JCM 21226 / LMG 7866 / NBRC 102419 / NCTC 12128 / CDC 0568-73).